Reading from the N-terminus, the 186-residue chain is Protein FAM9B (186 aa).

The disordered stretch occupies residues 1-93 (MAAWGKKHAG…KHALRKKQLK (93 aa)). 2 stretches are compositionally biased toward basic and acidic residues: residues 10–27 (GKDP…FTET) and 34–58 (DEHG…KPED). Positions 66-93 (KRKRMKMDKTCSKTKNKSKHALRKKQLK) are enriched in basic residues.

This sequence belongs to the XLR/SYCP3 family. In terms of tissue distribution, expressed in testis and ovary (at protein level).

It is found in the nucleus. The protein localises to the cytoplasm. The protein resides in the chromosome. May play a role in meiosis. The chain is Protein FAM9B from Homo sapiens (Human).